A 629-amino-acid polypeptide reads, in one-letter code: Hemocyanin F chain (629 aa).

Residues H172, H176, H203, H324, H328, and H364 each coordinate Cu cation. N-linked (GlcNAc...) asparagine glycosylation is found at N395 and N447. Residues 503–513 (SESSVTVSHTP) are compositionally biased toward polar residues. Residues 503–522 (SESSVTVSHTPTFEELQRGE) form a disordered region. N527 carries an N-linked (GlcNAc...) asparagine glycan. Residues C534 and C582 are joined by a disulfide bond. N615 carries an N-linked (GlcNAc...) asparagine glycan.

This sequence belongs to the tyrosinase family. Hemocyanin subfamily. Tarantula hemocyanin is a 24-chain polymer with seven different chains identified. Hemolymph.

Its subcellular location is the secreted. It is found in the extracellular space. Hemocyanins are copper-containing oxygen carriers occurring freely dissolved in the hemolymph of many mollusks and arthropods. This chain is Hemocyanin F chain (HCF), found in Aphonopelma sp. (American tarantula).